Here is a 133-residue protein sequence, read N- to C-terminus: Small ribosomal subunit protein uS8 (133 aa).

It belongs to the universal ribosomal protein uS8 family. In terms of assembly, part of the 30S ribosomal subunit. Contacts proteins S5 and S12.

Its function is as follows. One of the primary rRNA binding proteins, it binds directly to 16S rRNA central domain where it helps coordinate assembly of the platform of the 30S subunit. The protein is Small ribosomal subunit protein uS8 of Microcystis aeruginosa (strain NIES-843 / IAM M-2473).